A 194-amino-acid chain; its full sequence is MRESSQIRETTETKIKLSLQLDEGKNVSVQTGVGFFDHMLTLFARHGRFGLQVEAEGDVFVDAHHTVEDVGIVLGNCLKKALQNKEGINRYGSAYVPMDESLGFVAIDISGRSYIVFQGELTNPKLGDFDTELTEEFFRAVAHTANITLHARILYGSNTHHKIEALFKAFGRALREAVERNAHITGVNSTKGML.

This sequence belongs to the imidazoleglycerol-phosphate dehydratase family.

It is found in the cytoplasm. It carries out the reaction D-erythro-1-(imidazol-4-yl)glycerol 3-phosphate = 3-(imidazol-4-yl)-2-oxopropyl phosphate + H2O. Its pathway is amino-acid biosynthesis; L-histidine biosynthesis; L-histidine from 5-phospho-alpha-D-ribose 1-diphosphate: step 6/9. This is Imidazoleglycerol-phosphate dehydratase from Bacillus cereus (strain AH820).